The chain runs to 84 residues: Small ribosomal subunit protein bS20 (84 aa).

Belongs to the bacterial ribosomal protein bS20 family.

In terms of biological role, binds directly to 16S ribosomal RNA. This is Small ribosomal subunit protein bS20 from Phocaeicola vulgatus (strain ATCC 8482 / DSM 1447 / JCM 5826 / CCUG 4940 / NBRC 14291 / NCTC 11154) (Bacteroides vulgatus).